The following is an 81-amino-acid chain: Mu/omega-theraphotoxin-Hs1a (81 aa).

The N-terminal stretch at 1–21 (MRASMFLALAGLVLLFVVCYA) is a signal peptide. Residues 22 to 48 (SESEEKEFPRELLFKFFAVDDFKGEER) constitute a propeptide that is removed on maturation. 3 cysteine pairs are disulfide-bonded: Cys50–Cys65, Cys57–Cys70, and Cys64–Cys77.

The protein belongs to the neurotoxin 10 (Hwtx-1) family. 23 (HwTx-I) subfamily. Expressed by the venom gland.

The protein resides in the secreted. Lethal toxin with multiple biological activities. Inhibits voltage-gated TTX-sensitive sodium channels in DRG neurons (IC(50)=55 nM) and also shows activity when directly tested on Nav1.7/SCN9A (IC(50)=25.1-630 nM). Inhibits N-type calcium channels (Cav2.2/CACNA1B (IC(50)=100 nM)). Also blocks neuromuscular transmission. In vivo, intrathecal injected toxin shows analgesic activity in the rat formalin-induced pain model, without induction of motor dysfunction in rats. The protein is Mu/omega-theraphotoxin-Hs1a of Cyriopagopus schmidti (Chinese bird spider).